A 219-amino-acid polypeptide reads, in one-letter code: Inner membrane protein YccA (219 aa).

The Periplasmic segment spans residues 1–22 (MDRIVSSSHDRTSLLSTHKVLR). Helical transmembrane passes span 23-43 (NTYF…TAST) and 44-64 (VLML…GLMF). Residues 65-73 (LTYKTANKP) are Periplasmic-facing. The helical transmembrane segment at 74–94 (TGIISAFAFTGFLGYILGPIL) threads the bilayer. Topologically, residues 95-104 (NTYLSAGMGD) are cytoplasmic. Residues 105-125 (VIAMALGGTALVFFCCSAYVL) traverse the membrane as a helical segment. Topologically, residues 126-133 (TTRKDMSF) are periplasmic. A helical membrane pass occupies residues 134–154 (LGGMLMAGIVVVLIGMVANIF). Over 155–157 (LQL) the chain is Cytoplasmic. The chain crosses the membrane as a helical span at residues 158–178 (PALHLAISAVFILISSGAILF). Residues 179 to 195 (ETSNIIHGGETNYIRAT) are Periplasmic-facing. A helical membrane pass occupies residues 196–216 (VSLYVSLYNIFVSLLSILGFA). Over 217 to 219 (SRD) the chain is Cytoplasmic.

Belongs to the BI1 family.

The protein resides in the cell inner membrane. This Escherichia coli O6:H1 (strain CFT073 / ATCC 700928 / UPEC) protein is Inner membrane protein YccA (yccA).